A 412-amino-acid polypeptide reads, in one-letter code: Protein arginine N-methyltransferase 2 (412 aa).

The segment covering 48–65 (EKNRNGDKEFRESTDDNK) has biased composition (basic and acidic residues). Disordered regions lie at residues 48-69 (EKNR…TSNT) and 169-189 (SVQT…DDAT). Residues S181 and S184 each carry the phosphoserine modification. Residues 189-412 (TAANQQVYLK…YYYHPRITFA (224 aa)) form the RMT2 domain. S-adenosyl-L-methionine contacts are provided by residues Y196, M226, 250 to 255 (FGMGII), 271 to 273 (EAH), 298 to 299 (WQ), and D319.

This sequence belongs to the class I-like SAM-binding methyltransferase superfamily. RMT2 methyltransferase family. In terms of assembly, monomer. Interacts with nucleoporins NUP49, NUP57 and NUP100.

Its subcellular location is the cytoplasm. The protein resides in the nucleus. S-adenosyl-L-methionine-dependent protein-arginine N-methyltransferase that methylates the delta-nitrogen atom of arginine residues to form N5-methylarginine (type IV) in target proteins. Monomethylates ribosomal protein L12 (RPL12A/RPL12B) at 'Arg-67'. The protein is Protein arginine N-methyltransferase 2 of Saccharomyces cerevisiae (strain ATCC 204508 / S288c) (Baker's yeast).